We begin with the raw amino-acid sequence, 176 residues long: ATP synthase subunit delta (176 aa).

This sequence belongs to the ATPase delta chain family. In terms of assembly, F-type ATPases have 2 components, F(1) - the catalytic core - and F(0) - the membrane proton channel. F(1) has five subunits: alpha(3), beta(3), gamma(1), delta(1), epsilon(1). F(0) has three main subunits: a(1), b(2) and c(10-14). The alpha and beta chains form an alternating ring which encloses part of the gamma chain. F(1) is attached to F(0) by a central stalk formed by the gamma and epsilon chains, while a peripheral stalk is formed by the delta and b chains.

It is found in the cell inner membrane. Its function is as follows. F(1)F(0) ATP synthase produces ATP from ADP in the presence of a proton or sodium gradient. F-type ATPases consist of two structural domains, F(1) containing the extramembraneous catalytic core and F(0) containing the membrane proton channel, linked together by a central stalk and a peripheral stalk. During catalysis, ATP synthesis in the catalytic domain of F(1) is coupled via a rotary mechanism of the central stalk subunits to proton translocation. Functionally, this protein is part of the stalk that links CF(0) to CF(1). It either transmits conformational changes from CF(0) to CF(1) or is implicated in proton conduction. In Nitratiruptor sp. (strain SB155-2), this protein is ATP synthase subunit delta.